A 203-amino-acid chain; its full sequence is ATP-dependent Clp protease proteolytic subunit (203 aa).

The active-site Nucleophile is the Ser107. Residue His132 is part of the active site.

It belongs to the peptidase S14 family. In terms of assembly, fourteen ClpP subunits assemble into 2 heptameric rings which stack back to back to give a disk-like structure with a central cavity, resembling the structure of eukaryotic proteasomes.

Its subcellular location is the cytoplasm. The catalysed reaction is Hydrolysis of proteins to small peptides in the presence of ATP and magnesium. alpha-casein is the usual test substrate. In the absence of ATP, only oligopeptides shorter than five residues are hydrolyzed (such as succinyl-Leu-Tyr-|-NHMec, and Leu-Tyr-Leu-|-Tyr-Trp, in which cleavage of the -Tyr-|-Leu- and -Tyr-|-Trp bonds also occurs).. Cleaves peptides in various proteins in a process that requires ATP hydrolysis. Has a chymotrypsin-like activity. Plays a major role in the degradation of misfolded proteins. The polypeptide is ATP-dependent Clp protease proteolytic subunit (Pelagibacter ubique (strain HTCC1062)).